We begin with the raw amino-acid sequence, 257 residues long: MSYQQKFRLDGERAVVTGGGRAIGLCCTEALAEAGAAVVVIERSEADAEQALALRNRGYDVEVRVGDVTDAARMDAIATELADGGRPATILVNNAGIGQSGIPAQDLTDADWLRMMDVNLNGVFWCSRAFGRSMISMKRGAIVNLGSMSGTICNRPQPQTAYNVSKAAVHHLTRSLAAEWAHHGIRVNAVAPTYIETPMVVAVEANRERIPLWLADTPMARMGTPEEVASAVLFLASGAASLMTGAIVNVDAGFTCW.

Residues 21-23 (RAI), 67-68 (DV), N94, Y162, and K166 contribute to the NAD(+) site. Catalysis depends on Y162, which acts as the Proton acceptor.

The protein belongs to the short-chain dehydrogenases/reductases (SDR) family. As to quaternary structure, homotetramer. Requires Mg(2+) as cofactor.

It carries out the reaction galactitol + NAD(+) = keto-D-tagatose + NADH + H(+). In terms of biological role, catalyzes the oxidation of galactitol to D-tagatose. Also catalyzes the oxidation of a wide range of substrates, including polyvalent aliphatic alcohols and polyols, to the corresponding ketones and ketoses. Galactitol is the preferred substrate. In Rhizobium johnstonii (strain DSM 114642 / LMG 32736 / 3841) (Rhizobium leguminosarum bv. viciae), this protein is Galactitol 2-dehydrogenase.